A 162-amino-acid polypeptide reads, in one-letter code: MSTNPKPQKKKTNVTPTVAHRTSSSRVAVRSLVEFTCCRAGALDWVCARRERLPSGRNLEVDVSLSPRLVGPRAGPGLSPGTLGPSMAMRAAGGRDGSCLPVALGLAGAPQTPGVGRAIWVRSSIPLRAASPTSWGTYRSSAPLLEALPGPWRMASGFWKTA.

The tract at residues 1–23 (MSTNPKPQKKKTNVTPTVAHRTS) is disordered. The segment covering 13-23 (NVTPTVAHRTS) has biased composition (polar residues).

The protein resides in the host cytoplasm. The protein localises to the host perinuclear region. In Hepatitis C virus genotype 1a (isolate 1) (HCV), this protein is F protein.